The following is a 339-amino-acid chain: Phenylalanine--tRNA ligase alpha subunit (339 aa).

Glu-247 lines the Mg(2+) pocket.

Belongs to the class-II aminoacyl-tRNA synthetase family. Phe-tRNA synthetase alpha subunit type 1 subfamily. In terms of assembly, tetramer of two alpha and two beta subunits. Requires Mg(2+) as cofactor.

It localises to the cytoplasm. It catalyses the reaction tRNA(Phe) + L-phenylalanine + ATP = L-phenylalanyl-tRNA(Phe) + AMP + diphosphate + H(+). The chain is Phenylalanine--tRNA ligase alpha subunit from Deinococcus deserti (strain DSM 17065 / CIP 109153 / LMG 22923 / VCD115).